Here is a 426-residue protein sequence, read N- to C-terminus: F-box protein At2g15640 (426 aa).

The F-box domain maps to 1–48; the sequence is MNPSTITNDLTVEILSRLPAKSVARFHCVSKQWGSIFGSPYFKELFLT.

The protein is F-box protein At2g15640 of Arabidopsis thaliana (Mouse-ear cress).